Consider the following 100-residue polypeptide: Small ribosomal subunit protein uS14c (100 aa).

It belongs to the universal ribosomal protein uS14 family. In terms of assembly, part of the 30S ribosomal subunit.

The protein localises to the plastid. The protein resides in the chloroplast. Its function is as follows. Binds 16S rRNA, required for the assembly of 30S particles. In Oedogonium cardiacum (Filamentous green alga), this protein is Small ribosomal subunit protein uS14c.